The following is a 315-amino-acid chain: Methionyl-tRNA formyltransferase (315 aa).

(6S)-5,6,7,8-tetrahydrofolate is bound at residue 113–116; the sequence is SLLP.

Belongs to the Fmt family.

It catalyses the reaction L-methionyl-tRNA(fMet) + (6R)-10-formyltetrahydrofolate = N-formyl-L-methionyl-tRNA(fMet) + (6S)-5,6,7,8-tetrahydrofolate + H(+). In terms of biological role, attaches a formyl group to the free amino group of methionyl-tRNA(fMet). The formyl group appears to play a dual role in the initiator identity of N-formylmethionyl-tRNA by promoting its recognition by IF2 and preventing the misappropriation of this tRNA by the elongation apparatus. This chain is Methionyl-tRNA formyltransferase, found in Yersinia enterocolitica serotype O:8 / biotype 1B (strain NCTC 13174 / 8081).